The following is a 772-amino-acid chain: TBC domain-containing protein C4G8.04 (772 aa).

Over residues 143–161 (SFFPSSQEPSIPENPSSLT) the composition is skewed to polar residues. Disordered stretches follow at residues 143–163 (SFFP…LTGE) and 275–294 (KFFR…TFVS). Positions 275 to 291 (KFFRSSPRCSTPSVSST) are enriched in low complexity. Threonine 395 is modified (phosphothreonine). Residues 504–693 (GVPLCYKAKV…RIFDMLFCDG (190 aa)) enclose the Rab-GAP TBC domain.

The sequence is that of TBC domain-containing protein C4G8.04 from Schizosaccharomyces pombe (strain 972 / ATCC 24843) (Fission yeast).